Reading from the N-terminus, the 1986-residue chain is Protein Shroom3 (1986 aa).

Residues 1 to 21 (MKTPENLEEPSATPNPSRTPT) form a disordered region. A PDZ domain is found at 24–109 (FVYLEALLEG…TLRLVVRRDV (86 aa)). Disordered regions lie at residues 152 to 199 (CSEP…SSTS), 211 to 239 (RSPD…LLSP), 265 to 285 (TSSS…RSGS), 342 to 463 (QGCA…QPLL), and 564 to 1055 (NEDS…RRIF). Serine 212 is subject to Phosphoserine. Composition is skewed to polar residues over residues 357–376 (PSPS…TDNL) and 415–425 (PQTNSSGSQKT). Residues 430–440 (DQLHTVPERSP) are compositionally biased toward basic and acidic residues. Serine 439 and serine 443 each carry phosphoserine. Residues 595–607 (ACSNHHSLSSPQA) show a composition bias toward polar residues. Over residues 630–645 (QEDHNANLRQKVEREG) the composition is skewed to basic and acidic residues. Over residues 653–677 (NSGRTRSAFSSLQNIPESLRRQSNV) the composition is skewed to polar residues. Residues 747–761 (SGASQRRLSSSSSAA) show a composition bias toward low complexity. Basic and acidic residues predominate over residues 774-785 (KVSRIEEREQGR). 2 stretches are compositionally biased toward low complexity: residues 796-814 (YGPG…TSSS) and 865-874 (DGRGPPARGG). Phosphoserine is present on serine 888. Residues 895–908 (EAEREASWSEDRPG) are compositionally biased toward basic and acidic residues. Threonine 909 carries the phosphothreonine modification. Serine 912 and serine 969 each carry phosphoserine. The ASD1 domain occupies 927–1023 (IKDAQSRVLG…SEPEKMNEVG (97 aa)). Residues 1004–1020 (LTVEQKKRSYSEPEKMN) are compositionally biased toward basic and acidic residues. Residues serine 1063 and serine 1066 each carry the phosphoserine modification. Disordered regions lie at residues 1083-1102 (YIQR…PEAG), 1107-1223 (AQSA…AEDL), 1304-1425 (ATVA…PPWV), and 1446-1654 (ANLK…KTSE). Low complexity predominate over residues 1114 to 1127 (AGPAAPDGPGLASA). Positions 1134-1146 (REPEALPRKEHTH) are enriched in basic and acidic residues. Phosphoserine is present on residues tryptophan 1175, valine 1179, and serine 1219. Over residues 1307 to 1318 (ASSAPPESSGAA) the composition is skewed to low complexity. 2 positions are modified to phosphoserine: serine 1350 and serine 1354. Residues 1366–1399 (YRSQLAMDQQTGQQPPSSPASAVTQPTSPRSPEL) show a composition bias toward polar residues. A compositionally biased stretch (low complexity) spans 1455-1469 (PSRPSSCSTSDPDTP). The segment covering 1513 to 1524 (LPPPPPPSPPSE) has biased composition (pro residues). A compositionally biased stretch (polar residues) spans 1581–1630 (EGSQIMTATPPQTSAKGSEAESNTPSSASAQPQLNGSPGKQLCPSQTRNL). Residues 1634-1654 (PVERTQDLGKKTHAEPQKTSE) show a composition bias toward basic and acidic residues. The region spanning 1659–1947 (EALAKEIVHQ…QVRCLLESLP (289 aa)) is the ASD2 domain. Residues 1844–1890 (RLARVENVLRGLGEDASKEERSSLNEKRKVLAGQHEDARELKENLDR) adopt a coiled-coil conformation.

The protein belongs to the shroom family. In terms of assembly, interacts with F-actin. Interacts with ROCK1.

It is found in the cell junction. It localises to the adherens junction. The protein localises to the cytoplasm. The protein resides in the cytoskeleton. Its subcellular location is the apical cell membrane. Functionally, controls cell shape changes in the neuroepithelium during neural tube closure. Induces apical constriction in epithelial cells by promoting the apical accumulation of F-actin and myosin II, and probably by bundling stress fibers. Induces apicobasal cell elongation by redistributing gamma-tubulin and directing the assembly of robust apicobasal microtubule arrays. This Mus musculus (Mouse) protein is Protein Shroom3 (Shroom3).